The primary structure comprises 442 residues: Proline--tRNA ligase (442 aa).

It belongs to the class-II aminoacyl-tRNA synthetase family. ProS type 2 subfamily. In terms of assembly, homodimer.

It localises to the cytoplasm. It carries out the reaction tRNA(Pro) + L-proline + ATP = L-prolyl-tRNA(Pro) + AMP + diphosphate. Its function is as follows. Catalyzes the attachment of proline to tRNA(Pro) in a two-step reaction: proline is first activated by ATP to form Pro-AMP and then transferred to the acceptor end of tRNA(Pro). The chain is Proline--tRNA ligase from Brucella canis (strain ATCC 23365 / NCTC 10854 / RM-666).